Reading from the N-terminus, the 639-residue chain is 1-deoxy-D-xylulose-5-phosphate synthase (639 aa).

Thiamine diphosphate contacts are provided by residues His79 and 120–122 (GHS). Position 151 (Asp151) interacts with Mg(2+). Residues 152-153 (GS), Asn180, Tyr289, and Glu371 contribute to the thiamine diphosphate site. Residue Asn180 coordinates Mg(2+).

This sequence belongs to the transketolase family. DXPS subfamily. Homodimer. It depends on Mg(2+) as a cofactor. The cofactor is thiamine diphosphate.

It carries out the reaction D-glyceraldehyde 3-phosphate + pyruvate + H(+) = 1-deoxy-D-xylulose 5-phosphate + CO2. The protein operates within metabolic intermediate biosynthesis; 1-deoxy-D-xylulose 5-phosphate biosynthesis; 1-deoxy-D-xylulose 5-phosphate from D-glyceraldehyde 3-phosphate and pyruvate: step 1/1. Its function is as follows. Catalyzes the acyloin condensation reaction between C atoms 2 and 3 of pyruvate and glyceraldehyde 3-phosphate to yield 1-deoxy-D-xylulose-5-phosphate (DXP). The sequence is that of 1-deoxy-D-xylulose-5-phosphate synthase from Agrobacterium fabrum (strain C58 / ATCC 33970) (Agrobacterium tumefaciens (strain C58)).